We begin with the raw amino-acid sequence, 368 residues long: Protein HGH1 homolog (368 aa).

It belongs to the HGH1 family.

In Drosophila pseudoobscura pseudoobscura (Fruit fly), this protein is Protein HGH1 homolog.